A 116-amino-acid polypeptide reads, in one-letter code: Flagellar transcriptional regulator FlhD (116 aa).

This sequence belongs to the FlhD family. As to quaternary structure, homodimer; disulfide-linked. Forms a heterohexamer composed of two FlhC and four FlhD subunits. Each FlhC binds a FlhD dimer, forming a heterotrimer, and a hexamer assembles by dimerization of two heterotrimers.

It localises to the cytoplasm. Its function is as follows. Functions in complex with FlhC as a master transcriptional regulator that regulates transcription of several flagellar and non-flagellar operons by binding to their promoter region. Activates expression of class 2 flagellar genes, including fliA, which is a flagellum-specific sigma factor that turns on the class 3 genes. Also regulates genes whose products function in a variety of physiological pathways. The polypeptide is Flagellar transcriptional regulator FlhD (Xenorhabdus nematophila (Achromobacter nematophilus)).